A 482-amino-acid polypeptide reads, in one-letter code: Glutamyl-tRNA(Gln) amidotransferase subunit A (482 aa).

Residues K80 and S159 each act as charge relay system in the active site. The Acyl-ester intermediate role is filled by S183.

This sequence belongs to the amidase family. GatA subfamily. Heterotrimer of A, B and C subunits.

It catalyses the reaction L-glutamyl-tRNA(Gln) + L-glutamine + ATP + H2O = L-glutaminyl-tRNA(Gln) + L-glutamate + ADP + phosphate + H(+). Allows the formation of correctly charged Gln-tRNA(Gln) through the transamidation of misacylated Glu-tRNA(Gln) in organisms which lack glutaminyl-tRNA synthetase. The reaction takes place in the presence of glutamine and ATP through an activated gamma-phospho-Glu-tRNA(Gln). In Neorickettsia sennetsu (strain ATCC VR-367 / Miyayama) (Ehrlichia sennetsu), this protein is Glutamyl-tRNA(Gln) amidotransferase subunit A.